The following is a 98-amino-acid chain: NADH-ubiquinone oxidoreductase chain 4L (98 aa).

Helical transmembrane passes span 1 to 21 (MNLIDLILIAIYVIGISGLIF), 26 to 46 (IINILIISELNLGTLGMLFVL), and 61 to 81 (LYILTFTAAESAIGLAIVVIL).

This sequence belongs to the complex I subunit 4L family.

It is found in the mitochondrion membrane. The catalysed reaction is a ubiquinone + NADH + 5 H(+)(in) = a ubiquinol + NAD(+) + 4 H(+)(out). In terms of biological role, core subunit of the mitochondrial membrane respiratory chain NADH dehydrogenase (Complex I) that is believed to belong to the minimal assembly required for catalysis. Complex I functions in the transfer of electrons from NADH to the respiratory chain. The immediate electron acceptor for the enzyme is believed to be ubiquinone. In Dictyostelium citrinum (Slime mold), this protein is NADH-ubiquinone oxidoreductase chain 4L (nad4L).